Here is a 164-residue protein sequence, read N- to C-terminus: MADYSFDIVSKVDTNLIEESISVALKEITNRYDFKDSNSSMELNTKDNEIKLSSADDFKVKSLYDILLTRLSKRGISLKNFQPGKIESALGGTAKQSVKIQQGIPADKAKEIVRIIKDAKIKVNASIQGDQLRVTSKSKDDLQATMALLKGKDLGLDLQFTNYR.

This sequence belongs to the YajQ family.

Functionally, nucleotide-binding protein. The protein is Nucleotide-binding protein Emin_0136 of Elusimicrobium minutum (strain Pei191).